Reading from the N-terminus, the 406-residue chain is ATP-dependent RNA helicase eIF4A (406 aa).

A Q motif motif is present at residues Asp25–Gln53. Residues Ile56–Ile226 form the Helicase ATP-binding domain. Residue Ala69 to Thr76 participates in ATP binding. A DEAD box motif is present at residues Asp174 to Asp177. A Helicase C-terminal domain is found at Gly237–Phe398.

Belongs to the DEAD box helicase family. eIF4A subfamily. As to quaternary structure, component of the eIF4F complex, which composition varies with external and internal environmental conditions. It is composed of at least eIF4A, eIF4E and eIF4G.

The protein localises to the cytoplasm. It carries out the reaction ATP + H2O = ADP + phosphate + H(+). ATP-dependent RNA helicase which is a subunit of the eIF4F complex involved in cap recognition and is required for mRNA binding to ribosome. In the current model of translation initiation, eIF4A unwinds RNA secondary structures in the 5'-UTR of mRNAs which is necessary to allow efficient binding of the small ribosomal subunit, and subsequent scanning for the initiator codon. In Aspergillus fumigatus (strain ATCC MYA-4609 / CBS 101355 / FGSC A1100 / Af293) (Neosartorya fumigata), this protein is ATP-dependent RNA helicase eIF4A (tif1).